The sequence spans 250 residues: Sugar fermentation stimulation protein homolog (250 aa).

This sequence belongs to the SfsA family.

The protein is Sugar fermentation stimulation protein homolog of Synechococcus sp. (strain CC9311).